The following is a 211-amino-acid chain: Thymidylate kinase (211 aa).

11–18 provides a ligand contact to ATP; that stretch reads GPDGAGKT.

Belongs to the thymidylate kinase family.

It catalyses the reaction dTMP + ATP = dTDP + ADP. In terms of biological role, phosphorylation of dTMP to form dTDP in both de novo and salvage pathways of dTTP synthesis. The protein is Thymidylate kinase of Streptococcus equi subsp. equi (strain 4047).